The sequence spans 1177 residues: MTGQLVQYGRHRQRRSYARISEVLELPNLIEIQTSSYQWFLDEGLREMFQDISPIEDFTGNLSLEFIDYSLGEPKYSVDECKERDVTYAAPLRVKVRLINKETGEVKEQDVFMGDFPLMTETGTFVINGAERVIVSQLVRSPSVYYSGKVDKNGKRGFTATVIPNRGAWLEYETDAKDVVYVRIDRTRKLPVTVLLRALGFGSDQEITELLGDNEYLSNTLEKDNTDSTEKALLEIYERLRPGEPPTVENAKSLLVSRFFDPKRYDLANVGRYKINKKLHIKNRLFNQRLAETLVDPETGEILAAEGTILDRRTLDRILPYLEKNIGFKTAKPMGGVVEGDVELQSIKIYAPESEGERVINVIGNANITRDVKHITPGDILASISYFFNLLYKVGDTDDIDHLGNRRLRSVGELLQNQFRIGLSRMERVVRERMSIQDTNAITPQALINIRPVIASIKEFFGSSQLSQFMDQTNPLAELTHKRRLSALGPGGLTRERAGFEVRDVHYSHYGRMCPIETPEGPNIGLINSLSSFAKVNEFGFIETPYRRVDPETGLVTGHVDYLTADEEDNYVVAQANMKLSDEGEFLSEDIVARFRGENIVTNRERIDYMDVSPKQVVSAATACIPFLENDDSNRALMGANMQRQAVPLMNPESPIVGTGMEYVSAKDSGAAVICKHPGVVERVEAREVWVRRYVEVDGQTVKGDLDRYKMQKFIRSNQGTCYNQRPIVSVGNEVVKGEILADGPSMELGELALGRNVLVGFMTWDGYNYEDAIIMSERLVKDDVYTSIHIEEYESEARDTKLGPEEITRDIPNVGEDALRNLDERGIIRVGAEVKDGDLLVGKVTPKGVTELTAEERLLHAIFGEKAREVRDTSLRVPHGGGGIILDVKVFNREDGDELPPGVNQLVRAYIVQKRKISEGDKMAGRHGNKGVISRILPEEDMPYLPDGTPIDIMLNPLGVPSRMNIGQVLELHLGMAARYLGIHIATPVFDGAREEDVWGTIEEAGMANDAKTILYDGRTGEPFDNRVSVGVMYMIKLAHMVDDKLHARSTGPYSLVTQQPLGGKAQFGGQRFGEMEVWALEAYGAAYTLQEILTVKSDDVVGRVKTYEAIVKGENVPEPGVPESFKVLIKELQSLGMDVKMMSSDDTEIEMRDTEDDDDHQSADKLNVEVETTKE.

A compositionally biased stretch (acidic residues) spans 1147 to 1161 (DDTEIEMRDTEDDDD). The segment at 1147-1177 (DDTEIEMRDTEDDDDHQSADKLNVEVETTKE) is disordered. Residues 1162–1177 (HQSADKLNVEVETTKE) show a composition bias toward basic and acidic residues.

The protein belongs to the RNA polymerase beta chain family. In terms of assembly, the RNAP catalytic core consists of 2 alpha, 1 beta, 1 beta' and 1 omega subunit. When a sigma factor is associated with the core the holoenzyme is formed, which can initiate transcription.

The catalysed reaction is RNA(n) + a ribonucleoside 5'-triphosphate = RNA(n+1) + diphosphate. Its function is as follows. DNA-dependent RNA polymerase catalyzes the transcription of DNA into RNA using the four ribonucleoside triphosphates as substrates. This chain is DNA-directed RNA polymerase subunit beta, found in Bacillus cereus (strain G9842).